The primary structure comprises 456 residues: MATAYIIGLGRSGIAAAKCLKQDGWEVIISDCATSPNLIPLQQQLHAEGITVKLGHTPNLNASDLPELIVVSPGVPWDTPFLIEARERQIDTIGELELAWRYLQSSPWVGITGTNGKTTTTALVAAIFQGAKLNAPSCGNIGYAACELALSKLKKDNTSNYDWIIAEISSYQCESSQELSPKIGLWTTFTADHLSRHKTLDNYYAIKASLLYRSEYQIFNGDDPYLHQTGLHQWADAYWTTVKGKDNLLCDPSQGVYIQDNWVVAFGELILPLNLFKMPGFHNQQNLLMAIAAARLAGIEKGAIASAIATFTGVPHRLEYIRTVDGIDFINDSKATNYDAAEVGLLSVQSPTILIAGGEEKEGDDKKWIAQIKSKVIKVLLIGEAAENFAKRLHDCDYHDYEIVETMDKAIERSLILGQELKAKVILLSPACASFDQYQSFEHRGEHFRELCQKLI.

113-119 (GTNGKTT) provides a ligand contact to ATP.

It belongs to the MurCDEF family.

Its subcellular location is the cytoplasm. The catalysed reaction is UDP-N-acetyl-alpha-D-muramoyl-L-alanine + D-glutamate + ATP = UDP-N-acetyl-alpha-D-muramoyl-L-alanyl-D-glutamate + ADP + phosphate + H(+). It functions in the pathway cell wall biogenesis; peptidoglycan biosynthesis. Its function is as follows. Cell wall formation. Catalyzes the addition of glutamate to the nucleotide precursor UDP-N-acetylmuramoyl-L-alanine (UMA). This is UDP-N-acetylmuramoylalanine--D-glutamate ligase from Crocosphaera subtropica (strain ATCC 51142 / BH68) (Cyanothece sp. (strain ATCC 51142)).